A 196-amino-acid polypeptide reads, in one-letter code: ATP-dependent Clp protease proteolytic subunit (196 aa).

Ser101 (nucleophile) is an active-site residue. Residue His126 is part of the active site.

This sequence belongs to the peptidase S14 family. Component of the chloroplastic Clp protease core complex.

The protein localises to the plastid. Its subcellular location is the chloroplast stroma. The enzyme catalyses Hydrolysis of proteins to small peptides in the presence of ATP and magnesium. alpha-casein is the usual test substrate. In the absence of ATP, only oligopeptides shorter than five residues are hydrolyzed (such as succinyl-Leu-Tyr-|-NHMec, and Leu-Tyr-Leu-|-Tyr-Trp, in which cleavage of the -Tyr-|-Leu- and -Tyr-|-Trp bonds also occurs).. In terms of biological role, cleaves peptides in various proteins in a process that requires ATP hydrolysis. Has a chymotrypsin-like activity. Plays a major role in the degradation of misfolded proteins. The protein is ATP-dependent Clp protease proteolytic subunit of Aethionema cordifolium (Lebanon stonecress).